The primary structure comprises 503 residues: Maturase K (503 aa).

Belongs to the intron maturase 2 family. MatK subfamily.

Its subcellular location is the plastid. It is found in the chloroplast. Usually encoded in the trnK tRNA gene intron. Probably assists in splicing its own and other chloroplast group II introns. The polypeptide is Maturase K (Silene latifolia (White campion)).